Reading from the N-terminus, the 106-residue chain is Large ribosomal subunit protein P1 (106 aa).

Positions 69–106 are disordered; sequence AAAAAPAEEAKEEAKEEEEEEEEVKEEEAIEGLGALFG. Positions 83-98 are enriched in acidic residues; that stretch reads KEEEEEEEEVKEEEAI.

Belongs to the eukaryotic ribosomal protein P1/P2 family. Part of the 50S ribosomal subunit. Homodimer, it forms part of the ribosomal stalk which helps the ribosome interact with GTP-bound translation factors. Forms a heptameric uL10/P0(P1)2(P1)2(P1)2 complex, where uL10/P0 forms an elongated spine to which the P1 dimers bind in a sequential fashion.

Forms part of the ribosomal stalk, playing a central role in the interaction of the ribosome with GTP-bound translation factors. The sequence is that of Large ribosomal subunit protein P1 from Archaeoglobus fulgidus (strain ATCC 49558 / DSM 4304 / JCM 9628 / NBRC 100126 / VC-16).